Consider the following 360-residue polypeptide: MGLLLLVPLLLLPGSYGLPFYNGFYYSNSANDQNLGNGHGKDLLNGVKLVVETPEETLFTYQGASVILPCRYRYEPALVSPRRVRVKWWKLSENGAPEKDVLVAIGLRHRSFGDYQGRVHLRQDKEHDVSLEIQDLRLEDYGRYRCEVIDGLEDESGLVELELRGVVFPYQSPNGRYQFNFHEGQQVCAEQAAVVASFEQLFRAWEEGLDWCNAGWLQDATVQYPIMLPRQPCGGPGLAPGVRSYGPRHRRLHRYDVFCFATALKGRVYYLEHPEKLTLTEAREACQEDDATIAKVGQLFAAWKFHGLDRCDAGWLADGSVRYPVVHPHPNCGPPEPGVRSFGFPDPQSRLYGVYCYRQH.

Positions 1–17 are cleaved as a signal peptide; it reads MGLLLLVPLLLLPGSYG. The Ig-like V-type domain occupies 48-164; sequence KLVVETPEET…ESGLVELELR (117 aa). 5 disulfide bridges follow: cysteine 70-cysteine 146, cysteine 188-cysteine 259, cysteine 212-cysteine 233, cysteine 286-cysteine 356, and cysteine 311-cysteine 332. Link domains are found at residues 166 to 261 and 266 to 358; these read VVFP…FCFA and GRVY…YCYR.

The protein belongs to the HAPLN family. Widely expressed with highest levels in spleen and placenta.

The protein localises to the secreted. It is found in the extracellular space. Its subcellular location is the extracellular matrix. In terms of biological role, may function in hyaluronic acid binding. The protein is Hyaluronan and proteoglycan link protein 3 (HAPLN3) of Homo sapiens (Human).